The following is a 714-amino-acid chain: Sodium-dependent acetylcholine transporter (714 aa).

Residues 1–21 (MSVSSNDPEQRNGRGMASGNN) form a disordered region. The Cytoplasmic segment spans residues 1–74 (MSVSSNDPEQ…GNWSNKSDYL (74 aa)). The next 3 helical transmembrane spans lie at 75–95 (LAVI…FLVF), 100–120 (AAFL…MFFM), and 152–172 (ISGF…FYLI). The Extracellular segment spans residues 173 to 257 (NSFSFSIPWS…LSKGVDDFGT (85 aa)). N-linked (GlcNAc...) asparagine glycans are attached at residues N192, N205, N211, and N222. 9 consecutive transmembrane segments (helical) span residues 258–278 (LNWY…LCLF), 287–307 (VVYV…TRLL), 336–356 (AAVQ…TIAS), 368–388 (IWLV…LTFS), 422–442 (AGVS…LLVV), 476–496 (VCAL…LFWM), 502–522 (FVLT…INWV), 548–568 (ILFK…LWLD), and 584–604 (ILTA…VGIW). Residues 605–714 (QFCIAKGTIT…IPKFERETAI (110 aa)) are Cytoplasmic-facing.

It belongs to the sodium:neurotransmitter symporter (SNF) (TC 2.A.22) family. In terms of assembly, interacts with stn-1; part of the DGC. As to expression, body wall, and vulval and enteric muscles.

Its subcellular location is the cell membrane. It localises to the postsynaptic cell membrane. Its function is as follows. Mediates sodium-dependent uptake of acetylcholine at neuromuscular junctions during periods of increased synaptic activity, may also prevent spillover to adjacent synaptic sites. Not involved in the uptake of other neurotransmitters (GABA, glycine, proline and glutamate) and there was also no inhibition of uptake by adding an excess of other candidate substrates (GABA, glycine, taurine, creatine, proline, alanine, carnitine, glutamate and betaine). Required for muscle integrity; altered transport of acetylcholine due to loss of dystrophin-glycoprotein complex (DGC) function results in muscle degeneration. The chain is Sodium-dependent acetylcholine transporter from Caenorhabditis elegans.